We begin with the raw amino-acid sequence, 282 residues long: tRNA (guanine-N(1)-)-methyltransferase (282 aa).

S-adenosyl-L-methionine-binding positions include glycine 157 and 177–182 (VGDYIL).

It belongs to the RNA methyltransferase TrmD family. In terms of assembly, homodimer.

Its subcellular location is the cytoplasm. The catalysed reaction is guanosine(37) in tRNA + S-adenosyl-L-methionine = N(1)-methylguanosine(37) in tRNA + S-adenosyl-L-homocysteine + H(+). Functionally, specifically methylates guanosine-37 in various tRNAs. The chain is tRNA (guanine-N(1)-)-methyltransferase from Rickettsia bellii (strain RML369-C).